The chain runs to 138 residues: uncharacterized protein (138 aa).

The disordered stretch occupies residues 84 to 104 (PPKKTSPATSSSLKPRPGPRG). Residues 85–98 (PKKTSPATSSSLKP) show a composition bias toward low complexity.

To M.pneumoniae MPN_413 and MPN_463.

This is an uncharacterized protein from Mycoplasma pneumoniae (strain ATCC 29342 / M129 / Subtype 1) (Mycoplasmoides pneumoniae).